The chain runs to 231 residues: dTTP/UTP pyrophosphatase (231 aa).

The active-site Proton acceptor is the Asp85.

This sequence belongs to the Maf family. YhdE subfamily. A divalent metal cation is required as a cofactor.

It is found in the cytoplasm. It catalyses the reaction dTTP + H2O = dTMP + diphosphate + H(+). The catalysed reaction is UTP + H2O = UMP + diphosphate + H(+). Its function is as follows. Nucleoside triphosphate pyrophosphatase that hydrolyzes dTTP and UTP. May have a dual role in cell division arrest and in preventing the incorporation of modified nucleotides into cellular nucleic acids. The protein is dTTP/UTP pyrophosphatase of Psychrobacter arcticus (strain DSM 17307 / VKM B-2377 / 273-4).